A 570-amino-acid polypeptide reads, in one-letter code: Formate--tetrahydrofolate ligase (570 aa).

ATP is bound at residue 65–72 (TPLGEGKT).

This sequence belongs to the formate--tetrahydrofolate ligase family.

It catalyses the reaction (6S)-5,6,7,8-tetrahydrofolate + formate + ATP = (6R)-10-formyltetrahydrofolate + ADP + phosphate. Its pathway is one-carbon metabolism; tetrahydrofolate interconversion. This Herpetosiphon aurantiacus (strain ATCC 23779 / DSM 785 / 114-95) protein is Formate--tetrahydrofolate ligase.